The primary structure comprises 355 residues: Peptide chain release factor 1 (355 aa).

At glutamine 233 the chain carries N5-methylglutamine. Positions 280–293 are enriched in basic and acidic residues; that stretch reads ERRKKEQERADSRR. Residues 280 to 308 are disordered; the sequence is ERRKKEQERADSRRGQVGSGDRSERIRTY.

The protein belongs to the prokaryotic/mitochondrial release factor family. Post-translationally, methylated by PrmC. Methylation increases the termination efficiency of RF1.

Its subcellular location is the cytoplasm. Its function is as follows. Peptide chain release factor 1 directs the termination of translation in response to the peptide chain termination codons UAG and UAA. This chain is Peptide chain release factor 1, found in Rickettsia felis (strain ATCC VR-1525 / URRWXCal2) (Rickettsia azadi).